Reading from the N-terminus, the 134-residue chain is Cytochrome c-type biogenesis protein CcmE (134 aa).

Over 1-7 (MKRKYRR) the chain is Cytoplasmic. A helical; Signal-anchor for type II membrane protein membrane pass occupies residues 8-28 (LFVVIITLSIFAGSVVLVLGK). At 29–134 (LKNNVSFFYT…MPNKYKTNDL (106 aa)) the chain is on the periplasmic side. 2 residues coordinate heme: His120 and Tyr124.

This sequence belongs to the CcmE/CycJ family.

It localises to the cell inner membrane. Functionally, heme chaperone required for the biogenesis of c-type cytochromes. Transiently binds heme delivered by CcmC and transfers the heme to apo-cytochromes in a process facilitated by CcmF and CcmH. The polypeptide is Cytochrome c-type biogenesis protein CcmE (Ehrlichia ruminantium (strain Welgevonden)).